The following is a 633-amino-acid chain: Probable extracellular metalloproteinase 5 (633 aa).

The N-terminal stretch at 1 to 20 (MHGLLLAAAGLLSLPLHVLA) is a signal peptide. Positions 21–244 (HPQPSTNLAG…VHNVVDYVSH (224 aa)) are excised as a propeptide. Residue asparagine 285 is glycosylated (N-linked (GlcNAc...) asparagine). Residue histidine 428 coordinates Zn(2+). The active site involves glutamate 429. Residue histidine 432 participates in Zn(2+) binding. Residues asparagine 592 and asparagine 621 are each glycosylated (N-linked (GlcNAc...) asparagine).

Belongs to the peptidase M36 family. Zn(2+) serves as cofactor.

It is found in the secreted. In terms of biological role, secreted metalloproteinase probably acting as a virulence factor. This is Probable extracellular metalloproteinase 5 (MEP5) from Arthroderma benhamiae (strain ATCC MYA-4681 / CBS 112371) (Trichophyton mentagrophytes).